The following is a 337-amino-acid chain: Protein RETICULATA-RELATED 3, chloroplastic (337 aa).

The transit peptide at 1–59 directs the protein to the chloroplast; sequence MAAMAAKLQLSAKSDQSSVRLPRVINLSRDPTTRVSFPRNGSVCSLHTNFSSPHLAKPC. A compositionally biased stretch (gly residues) spans 70–89; sequence NNGGGSGSGGGGGGFGGSGG. The segment at 70–96 is disordered; the sequence is NNGGGSGSGGGGGGFGGSGGEASEESS. The next 2 helical transmembrane spans lie at 151–171 and 216–236; these read FVFSTLVVGSILNFVLMYMLA and VFASVGLAAGLVGTAISNGLI.

The protein belongs to the RETICULATA family. In terms of tissue distribution, expressed in root meristem, root vasculature, distal region of young leaf primordia, leaf bundle sheath cells, hydathodes and pollen grains.

Its subcellular location is the plastid. It is found in the chloroplast membrane. Its function is as follows. May play a role in leaf development. Required for leaf mesophyll cell division in the early stages of leaf organogenesis. This chain is Protein RETICULATA-RELATED 3, chloroplastic, found in Arabidopsis thaliana (Mouse-ear cress).